The following is a 148-amino-acid chain: Large ribosomal subunit protein uL22 (148 aa).

Belongs to the universal ribosomal protein uL22 family. In terms of assembly, part of the 50S ribosomal subunit.

Functionally, this protein binds specifically to 23S rRNA. It makes multiple contacts with different domains of the 23S rRNA in the assembled 50S subunit and ribosome. Its function is as follows. The globular domain of the protein is located near the polypeptide exit tunnel on the outside of the subunit, while an extended beta-hairpin is found that lines the wall of the exit tunnel in the center of the 70S ribosome. The chain is Large ribosomal subunit protein uL22 from Thermoplasma volcanium (strain ATCC 51530 / DSM 4299 / JCM 9571 / NBRC 15438 / GSS1).